The chain runs to 476 residues: Nyctalopin (476 aa).

The first 18 residues, 1 to 18, serve as a signal peptide directing secretion; that stretch reads MLILLLHAVVFSLPYTRA. Residues 19–57 form the LRRNT domain; sequence TEACLRACPAACTCSHVERGCSVRCDRAGLQRVPQEFPC. 11 LRR repeats span residues 58 to 79, 82 to 103, 106 to 128, 131 to 154, 155 to 177, 178 to 199, 202 to 223, 226 to 247, 250 to 271, 274 to 295, and 298 to 319; these read EAASIDLDRNGLRILGERAFGT, SLRRLSLRHNNLSFITPGAFKG, RLAELRLAHNGELRYLHVRTFAA, RLRRLDLAACRLFSVPERLLAELP, ALRELTAFDNLFRRVPGALRGLA, NLTHAHFERSRIEAVASGSLLG, RLRSLSLQANRVRAVHAGAFGD, ALEDLLLNDNLLATLPAAAFRG, RLRTLNLGGNALGSVARAWFSD, ELELLYLDRNSITFVEEGAFQN, and GLLALHLNGNRLTVLSWAAFQP. The N-linked (GlcNAc...) asparagine glycan is linked to N92. N178 carries an N-linked (GlcNAc...) asparagine glycan. N-linked (GlcNAc...) asparagine glycosylation is present at N295. Residues 331–383 enclose the LRRCT domain; that stretch reads NPWRCDCQLEWLRDWMEGSGRVADVACASPGSVAGQDLSQVVFERSSDGLCVD. Residues N388, N427, N434, and N438 are each glycosylated (N-linked (GlcNAc...) asparagine).

This sequence belongs to the small leucine-rich proteoglycan (SLRP) family. SLRP class IV subfamily. Expressed abundantly in retina with lower levels in brain, lung, spleen and testis. Not detected in kidney, heart or liver. In the retina, highest expression found in the inner nuclear layer and ganglion cell layer.

It is found in the secreted. The protein resides in the extracellular space. Its subcellular location is the extracellular matrix. The sequence is that of Nyctalopin (Nyx) from Mus musculus (Mouse).